A 202-amino-acid polypeptide reads, in one-letter code: Na(+)-translocating NADH-quinone reductase subunit E (202 aa).

A run of 6 helical transmembrane segments spans residues 11–31 (AVFI…FIAI), 35–55 (VETA…TVPA), 79–99 (LSFL…QILE), 114–134 (GVFL…LFMV), 144–164 (VVYG…LAGI), and 180–200 (LGIT…FSGV).

This sequence belongs to the NqrDE/RnfAE family. In terms of assembly, composed of six subunits; NqrA, NqrB, NqrC, NqrD, NqrE and NqrF.

Its subcellular location is the cell inner membrane. The catalysed reaction is a ubiquinone + n Na(+)(in) + NADH + H(+) = a ubiquinol + n Na(+)(out) + NAD(+). In terms of biological role, NQR complex catalyzes the reduction of ubiquinone-1 to ubiquinol by two successive reactions, coupled with the transport of Na(+) ions from the cytoplasm to the periplasm. NqrA to NqrE are probably involved in the second step, the conversion of ubisemiquinone to ubiquinol. The sequence is that of Na(+)-translocating NADH-quinone reductase subunit E from Stutzerimonas stutzeri (strain A1501) (Pseudomonas stutzeri).